The primary structure comprises 436 residues: Adenylosuccinate synthetase (436 aa).

GTP contacts are provided by residues 12–18 (GDEGKGK) and 40–42 (GHT). Asp13 (proton acceptor) is an active-site residue. The Mg(2+) site is built by Asp13 and Gly40. Residues 13–16 (DEGK), 38–41 (NAGH), Thr128, Arg142, Gln223, Thr238, and Arg302 contribute to the IMP site. Catalysis depends on His41, which acts as the Proton donor. A substrate-binding site is contributed by 298-304 (TTTGRRR). Residues Arg304, 330–332 (KLD), and 412–414 (SLG) contribute to the GTP site.

It belongs to the adenylosuccinate synthetase family. As to quaternary structure, homodimer. The cofactor is Mg(2+).

The protein resides in the cytoplasm. The catalysed reaction is IMP + L-aspartate + GTP = N(6)-(1,2-dicarboxyethyl)-AMP + GDP + phosphate + 2 H(+). Its pathway is purine metabolism; AMP biosynthesis via de novo pathway; AMP from IMP: step 1/2. Plays an important role in the de novo pathway of purine nucleotide biosynthesis. Catalyzes the first committed step in the biosynthesis of AMP from IMP. In Prochlorococcus marinus (strain MIT 9215), this protein is Adenylosuccinate synthetase.